A 154-amino-acid chain; its full sequence is 3-dehydroquinate dehydratase (154 aa).

The active-site Proton acceptor is Tyr22. 3 residues coordinate substrate: Asn73, His79, and Asp86. The Proton donor role is filled by His99. Residues 100 to 101 and Arg110 each bind substrate; that span reads LS.

This sequence belongs to the type-II 3-dehydroquinase family. Homododecamer.

The catalysed reaction is 3-dehydroquinate = 3-dehydroshikimate + H2O. The protein operates within metabolic intermediate biosynthesis; chorismate biosynthesis; chorismate from D-erythrose 4-phosphate and phosphoenolpyruvate: step 3/7. Catalyzes a trans-dehydration via an enolate intermediate. This chain is 3-dehydroquinate dehydratase, found in Carboxydothermus hydrogenoformans (strain ATCC BAA-161 / DSM 6008 / Z-2901).